A 438-amino-acid chain; its full sequence is MKIQHLMQDPFIQKLMRFEEVMWFNPKSAGVKTGLSYVGLDVSDTQQAAERLQRFAPYFCRAFPETQKTKGILESELVSIDKMKSALIDHYHMPIQGRLLLKKDSHLPISGSIKARGGIYEVLAYAEKLALEHHLITESDDYSQLCDEKIKDFFSRYSIAVGSTGNLGLSIGIMGAVLGFKVSVHMSADAREWKKQKLRSYGVNVVEYTQDYGVAVAQGRKAALSDPNCFFIDDENSTTLFLGYSVAGQRLKQQFLEQGIKVDENHPLFVYLPCGVGGGPGGVAFGLKLAFGDYVHCIFAEPTHSPCMLLGVYTGLHDKIAVQDLGIDNITAADGLAVGRASGFVGRAMEHLLDGFYTIEDQKLYDLLGLLHKTENIQLEPSALAGMIGPLHINHSDYLRRYHITQEQLANATHIVWATGGGMVPDVEMQKYLSLGRF.

At Lys-114 the chain carries N6-(pyridoxal phosphate)lysine.

Belongs to the serine/threonine dehydratase family. DsdA subfamily. It depends on pyridoxal 5'-phosphate as a cofactor.

It carries out the reaction D-serine = pyruvate + NH4(+). The chain is Probable D-serine dehydratase from Histophilus somni (strain 2336) (Haemophilus somnus).